The chain runs to 255 residues: Glutamate racemase (255 aa).

Substrate contacts are provided by residues 7 to 8 (DS) and 39 to 40 (YG). Residue Cys70 is the Proton donor/acceptor of the active site. 71–72 (NT) contacts substrate. The Proton donor/acceptor role is filled by Cys181. 182–183 (TH) contacts substrate.

This sequence belongs to the aspartate/glutamate racemases family.

The enzyme catalyses L-glutamate = D-glutamate. It functions in the pathway cell wall biogenesis; peptidoglycan biosynthesis. Provides the (R)-glutamate required for cell wall biosynthesis. This is Glutamate racemase from Helicobacter acinonychis (strain Sheeba).